The following is a 166-amino-acid chain: NAD(P)H-quinone oxidoreductase subunit I, chloroplastic (166 aa).

2 consecutive 4Fe-4S ferredoxin-type domains span residues 55–84 (GRIH…VDWK) and 95–124 (LNYS…MTEE). [4Fe-4S] cluster is bound by residues Cys-64, Cys-67, Cys-70, Cys-74, Cys-104, Cys-107, Cys-110, and Cys-114.

This sequence belongs to the complex I 23 kDa subunit family. As to quaternary structure, NDH is composed of at least 16 different subunits, 5 of which are encoded in the nucleus. [4Fe-4S] cluster serves as cofactor.

Its subcellular location is the plastid. The protein localises to the chloroplast thylakoid membrane. It catalyses the reaction a plastoquinone + NADH + (n+1) H(+)(in) = a plastoquinol + NAD(+) + n H(+)(out). The enzyme catalyses a plastoquinone + NADPH + (n+1) H(+)(in) = a plastoquinol + NADP(+) + n H(+)(out). In terms of biological role, NDH shuttles electrons from NAD(P)H:plastoquinone, via FMN and iron-sulfur (Fe-S) centers, to quinones in the photosynthetic chain and possibly in a chloroplast respiratory chain. The immediate electron acceptor for the enzyme in this species is believed to be plastoquinone. Couples the redox reaction to proton translocation, and thus conserves the redox energy in a proton gradient. The polypeptide is NAD(P)H-quinone oxidoreductase subunit I, chloroplastic (Stevia rebaudiana (Stevia)).